A 97-amino-acid polypeptide reads, in one-letter code: Large ribosomal subunit protein uL23 (97 aa).

The protein belongs to the universal ribosomal protein uL23 family. Part of the 50S ribosomal subunit. Contacts protein L29, and trigger factor when it is bound to the ribosome.

Functionally, one of the early assembly proteins it binds 23S rRNA. One of the proteins that surrounds the polypeptide exit tunnel on the outside of the ribosome. Forms the main docking site for trigger factor binding to the ribosome. In Anaeromyxobacter sp. (strain Fw109-5), this protein is Large ribosomal subunit protein uL23.